We begin with the raw amino-acid sequence, 334 residues long: Leucine-rich repeat-containing protein 26 (334 aa).

The signal sequence occupies residues 1–26 (MRGPSWSRPRPLLLLLLLLSPWPVWA). Residues 27–261 (QVSATASPSG…HCAQPLALRD (235 aa)) lie on the Extracellular side of the membrane. One can recognise an LRRNT domain in the interval 34-71 (PSGSLGAPDCPEVCTCVPGGLASCSALSLPAVPPGLSL). Disulfide bonds link C43–C49 and C47–C57. 5 LRR repeats span residues 72-93 (RLRALLLDHNRVRALPPGAFAG), 96-117 (ALQRLDLRENGLHSVHVRAFWG), 120-141 (ALQLLDLSANQLEALAPGTFAP), 144-167 (ALRNLSLAGNRLARLEPAALGALP), and 168-190 (LLRSLSLQDNELAALAPGLLGRL). N-linked (GlcNAc...) asparagine glycosylation is present at N147. Residues 201–255 (NPWGCGCALRPLCAWLRRHPLPASEAETVLCVWPGRLTLSPLTAFSDAAFSHCAQ) enclose the LRRCT domain. Disulfide bonds link C205–C231 and C207–C253. Residues 262 to 282 (LAVVYTLGPASFLVSLASCLA) traverse the membrane as a helical segment. Residues 283 to 334 (LGSGLTACRARRRRLRTAALRPPRPPDPNPDPDPHGCASPADPGSPAAAAQA) lie on the Cytoplasmic side of the membrane. Positions 298 to 334 (RTAALRPPRPPDPNPDPDPHGCASPADPGSPAAAAQA) are disordered. Residues 304–313 (PPRPPDPNPD) are compositionally biased toward pro residues. The segment covering 320–334 (ASPADPGSPAAAAQA) has biased composition (low complexity).

In terms of assembly, interacts with KCNMA1. Isoform 1 is expressed highly in normal prostate and salivary gland, very weakly in colon, pancreas, and intestine, and not at all in other tissues. Isoform 1 is expressed highly in many cancer cell lines and in breast cancer, pancreatic cancer and colon cancer. Isoform 2 is expressed in cancer cell lines.

Its subcellular location is the cell membrane. The protein resides in the cytoplasm. It is found in the cytoskeleton. Its function is as follows. Auxiliary protein of the large-conductance, voltage and calcium-activated potassium channel (BK alpha). Required for the conversion of BK alpha channels from a high-voltage to a low-voltage activated channel type in non-excitable cells. These are characterized by negative membrane voltages and constant low levels of calcium. The chain is Leucine-rich repeat-containing protein 26 (LRRC26) from Homo sapiens (Human).